Consider the following 1197-residue polypeptide: DNA-directed RNA polymerase subunit beta (1197 aa).

The span at 581–597 shows a compositional bias: polar residues; sequence QANSPLNDDGSFTNPTV. Disordered regions lie at residues 581 to 603 and 1172 to 1197; these read QANSPLNDDGSFTNPTVTARHGD and EKPDLFKGDDDDTPRIPATKLDEENV.

It belongs to the RNA polymerase beta chain family. The RNAP catalytic core consists of 2 alpha, 1 beta, 1 beta' and 1 omega subunit. When a sigma factor is associated with the core the holoenzyme is formed, which can initiate transcription.

It catalyses the reaction RNA(n) + a ribonucleoside 5'-triphosphate = RNA(n+1) + diphosphate. Its function is as follows. DNA-dependent RNA polymerase catalyzes the transcription of DNA into RNA using the four ribonucleoside triphosphates as substrates. This chain is DNA-directed RNA polymerase subunit beta, found in Oenococcus oeni (strain ATCC BAA-331 / PSU-1).